The chain runs to 300 residues: Nucleotide-binding protein Daci_5422 (300 aa).

10–17 (GMSGSGKS) serves as a coordination point for ATP. Residue 59–62 (DARS) coordinates GTP.

This sequence belongs to the RapZ-like family.

Functionally, displays ATPase and GTPase activities. The chain is Nucleotide-binding protein Daci_5422 from Delftia acidovorans (strain DSM 14801 / SPH-1).